Here is a 251-residue protein sequence, read N- to C-terminus: CDP-diacylglycerol pyrophosphatase (251 aa).

Residues 4-24 (AGLLFLVMIVIAVVATGIGYW) form a helical membrane-spanning segment.

Belongs to the Cdh family.

It is found in the cell inner membrane. The catalysed reaction is a CDP-1,2-diacyl-sn-glycerol + H2O = a 1,2-diacyl-sn-glycero-3-phosphate + CMP + 2 H(+). Its pathway is phospholipid metabolism; CDP-diacylglycerol degradation; phosphatidate from CDP-diacylglycerol: step 1/1. This is CDP-diacylglycerol pyrophosphatase from Escherichia coli O45:K1 (strain S88 / ExPEC).